The primary structure comprises 350 residues: Hydroxymethylglutaryl-CoA synthase (350 aa).

(3S)-3-hydroxy-3-methylglutaryl-CoA contacts are provided by aspartate 33 and valine 34. Glutamate 85 acts as the Proton donor/acceptor in catalysis. Cysteine 117 and threonine 158 together coordinate (3S)-3-hydroxy-3-methylglutaryl-CoA. Cysteine 117 acts as the Acyl-thioester intermediate in catalysis. Residue arginine 204 coordinates CoA. (3S)-3-hydroxy-3-methylglutaryl-CoA-binding residues include threonine 206 and histidine 239. Histidine 239 functions as the Proton donor/acceptor in the catalytic mechanism. Lysine 244 provides a ligand contact to CoA. (3S)-3-hydroxy-3-methylglutaryl-CoA is bound by residues lysine 248, asparagine 271, and serine 301.

The protein belongs to the thiolase-like superfamily. Archaeal HMG-CoA synthase family. In terms of assembly, interacts with acetoacetyl-CoA thiolase that catalyzes the precedent step in the pathway and with a DUF35 protein. The acetoacetyl-CoA thiolase/HMG-CoA synthase complex channels the intermediate via a fused CoA-binding site, which allows for efficient coupling of the endergonic thiolase reaction with the exergonic HMGCS reaction.

It catalyses the reaction acetoacetyl-CoA + acetyl-CoA + H2O = (3S)-3-hydroxy-3-methylglutaryl-CoA + CoA + H(+). The protein operates within metabolic intermediate biosynthesis; (R)-mevalonate biosynthesis; (R)-mevalonate from acetyl-CoA: step 2/3. In terms of biological role, catalyzes the condensation of acetyl-CoA with acetoacetyl-CoA to form 3-hydroxy-3-methylglutaryl-CoA (HMG-CoA). Functions in the mevalonate (MVA) pathway leading to isopentenyl diphosphate (IPP), a key precursor for the biosynthesis of isoprenoid compounds that are building blocks of archaeal membrane lipids. In Methanopyrus kandleri (strain AV19 / DSM 6324 / JCM 9639 / NBRC 100938), this protein is Hydroxymethylglutaryl-CoA synthase.